Reading from the N-terminus, the 261-residue chain is Ribonuclease HII (261 aa).

The RNase H type-2 domain maps to 71–259 (KYIAGVDEVG…VKEAKLHFDS (189 aa)). The a divalent metal cation site is built by D77, E78, and D169.

Belongs to the RNase HII family. The cofactor is Mn(2+). It depends on Mg(2+) as a cofactor.

Its subcellular location is the cytoplasm. The enzyme catalyses Endonucleolytic cleavage to 5'-phosphomonoester.. In terms of biological role, endonuclease that specifically degrades the RNA of RNA-DNA hybrids. The polypeptide is Ribonuclease HII (Listeria monocytogenes serotype 4b (strain F2365)).